Consider the following 919-residue polypeptide: MLX-interacting protein (919 aa).

Positions 1–72 (MAADVFMCSP…AGPGREEPPR (72 aa)) are disordered. Ala-2 bears the N-acetylalanine mark. 4 positions are modified to phosphoserine: Ser-9, Ser-27, Ser-33, and Ser-39. The segment covering 27-37 (SEDDDDSDTDE) has biased composition (acidic residues). The segment covering 44–56 (SGAATPARAHASA) has biased composition (low complexity). Residues 73-327 (RQQIIHSGHF…PLQPNLDFMD (255 aa)) are required for cytoplasmic localization. The tract at residues 322-445 (NLDFMDTFEP…LLSPSPAPPP (124 aa)) is transactivation domain. Disordered stretches follow at residues 542–562 (KPVSLTGGRPKQPHKIVPAPK) and 633–712 (DLGH…SDPK). Ser-669 bears the Phosphoserine mark. The segment covering 670–685 (PQVTVTGPSRDCPNSG) has biased composition (polar residues). Over residues 686–706 (QASPCASEQSPSPQSPQNNCS) the composition is skewed to low complexity. Residues 719-769 (NRQMKHISAEQKRRFNIKMCFDMLNSLISNNSKLTSHAITLQKTVEYITKL) enclose the bHLH domain. The tract at residues 769 to 790 (LQQERGQMQEEARRLREEIEEL) is leucine-zipper. The tract at residues 832–881 (WKFWIFSIIIKPLFESFKGMVSTSSLEELHRTALSWLDQHCSLPILRPMV) is mediates heterotypic interactions between MLXIP and MLX and is required for cytoplasmic localization.

As to quaternary structure, efficient DNA binding requires dimerization with another bHLH protein. Binds DNA as a homodimer or a heterodimer with MLX. As to expression, widely expressed in adult tissues. Most abundant in skeletal muscle.

Its subcellular location is the cytoplasm. It is found in the nucleus. The protein localises to the mitochondrion outer membrane. In terms of biological role, binds DNA as a heterodimer with MLX and activates transcription. Binds to the canonical E box sequence 5'-CACGTG-3'. Plays a role in transcriptional activation of glycolytic target genes. Involved in glucose-responsive gene regulation. The protein is MLX-interacting protein of Homo sapiens (Human).